The following is a 461-amino-acid chain: tRNA modification GTPase MnmE (461 aa).

3 residues coordinate (6S)-5-formyl-5,6,7,8-tetrahydrofolate: Arg-23, Glu-84, and Arg-123. The TrmE-type G domain maps to 216 to 383 (GARAALIGRP…LGATVARLLL (168 aa)). Asn-226 serves as a coordination point for K(+). GTP-binding positions include 226-231 (NAGKSS), 245-251 (TPIPGTT), and 270-273 (DTAG). Ser-230 lines the Mg(2+) pocket. Residues Thr-245, Ile-247, and Thr-250 each contribute to the K(+) site. Thr-251 is a binding site for Mg(2+). Lys-461 lines the (6S)-5-formyl-5,6,7,8-tetrahydrofolate pocket.

The protein belongs to the TRAFAC class TrmE-Era-EngA-EngB-Septin-like GTPase superfamily. TrmE GTPase family. Homodimer. Heterotetramer of two MnmE and two MnmG subunits. The cofactor is K(+).

Its subcellular location is the cytoplasm. In terms of biological role, exhibits a very high intrinsic GTPase hydrolysis rate. Involved in the addition of a carboxymethylaminomethyl (cmnm) group at the wobble position (U34) of certain tRNAs, forming tRNA-cmnm(5)s(2)U34. The sequence is that of tRNA modification GTPase MnmE from Roseiflexus sp. (strain RS-1).